The chain runs to 354 residues: Uroporphyrinogen decarboxylase (354 aa).

Substrate is bound by residues 27–31, Asp-77, Tyr-154, Thr-209, and His-327; that span reads RQAGR.

This sequence belongs to the uroporphyrinogen decarboxylase family. Homodimer.

The protein resides in the cytoplasm. It catalyses the reaction uroporphyrinogen III + 4 H(+) = coproporphyrinogen III + 4 CO2. It functions in the pathway porphyrin-containing compound metabolism; protoporphyrin-IX biosynthesis; coproporphyrinogen-III from 5-aminolevulinate: step 4/4. In terms of biological role, catalyzes the decarboxylation of four acetate groups of uroporphyrinogen-III to yield coproporphyrinogen-III. This Hydrogenovibrio crunogenus (strain DSM 25203 / XCL-2) (Thiomicrospira crunogena) protein is Uroporphyrinogen decarboxylase.